The primary structure comprises 261 residues: Ribonuclease PH (261 aa).

Residues Arg-87 and 125-127 contribute to the phosphate site; that span reads GTR.

Belongs to the RNase PH family. Homohexameric ring arranged as a trimer of dimers.

The catalysed reaction is tRNA(n+1) + phosphate = tRNA(n) + a ribonucleoside 5'-diphosphate. Phosphorolytic 3'-5' exoribonuclease that plays an important role in tRNA 3'-end maturation. Removes nucleotide residues following the 3'-CCA terminus of tRNAs; can also add nucleotides to the ends of RNA molecules by using nucleoside diphosphates as substrates, but this may not be physiologically important. Probably plays a role in initiation of 16S rRNA degradation (leading to ribosome degradation) during starvation. The chain is Ribonuclease PH from Thermoanaerobacter pseudethanolicus (strain ATCC 33223 / 39E) (Clostridium thermohydrosulfuricum).